A 203-amino-acid polypeptide reads, in one-letter code: Sporulation delaying protein C (203 aa).

The first 32 residues, 1–32, serve as a signal peptide directing secretion; it reads MKSKLLRLLIVSMVTILVFSLVGLSKESSTSA. Residues 33–140 constitute a propeptide, removed in mature form; it reads KENHTFSGED…KYSSNKVTPS (108 aa). C141 and C147 are joined by a disulfide. Residues 183-203 constitute a propeptide, removed in mature form; sequence SASNNSDLEAAAAKTLKLIHQ.

As to quaternary structure, proprotein probably interacts with chaperone CsaA. Post-translationally, production of active SDP (able to induce SdpI and kill cells) is a multi-step process that requires signal peptide cleavage (probably by SipS or SipT) as well as SdpA and SdpB. The disulfide bond is not required for maximum toxicity.

The protein resides in the secreted. In terms of biological role, produces a 42-residue extracellular sporulation delaying protein (SDP) that collapses the proton motive force (probably both the membrane potential and pH gradient) across the cell membrane, which leads to autolysis; may form a proton channel. Induces the lysis of other B.subtilis cells that have not entered the sporulation pathway, inducing cannibalism to provide a source of nutrients to support sporulation, and at the same time delaying commitment to the energetically expensive and irreversible onset of sporulation. Addition of SDP to liquid cultures halts growth, leads to increased cell permeability and eventually cell lysis in a significant subset of the population, although some cells survive and resume growth after a lag period. Effects of SDP are irreversible within 10 minutes. Addition of SDP to solid cultures induces killing, it is much more effective than SKF (AC O31422). Has antibiotic action against Gram-positive Firmicutes (L.acidophilus, M.megaterium, P.polymyxa, S.aureus, S.epidermidis) but not Actinobacteria M.luteus or Gram-negative P.aeruginosa or K.pneumoniae. SDP induces expression of the sdpR-sdpI operon. Its maturation is dependent on SdpA and SdpB. Also functions as a ligand, binds to SdpI triggering a signal transduction cascade that protects the cell against the toxic effects of its own SDP. The polypeptide is Sporulation delaying protein C (Bacillus subtilis (strain 168)).